A 216-amino-acid polypeptide reads, in one-letter code: Pyrophosphatase PpaX (216 aa).

The Nucleophile role is filled by Asp9.

Belongs to the HAD-like hydrolase superfamily. PpaX family. Mg(2+) serves as cofactor.

The catalysed reaction is diphosphate + H2O = 2 phosphate + H(+). Its function is as follows. Hydrolyzes pyrophosphate formed during P-Ser-HPr dephosphorylation by HPrK/P. Might play a role in controlling the intracellular pyrophosphate pool. The chain is Pyrophosphatase PpaX from Bacillus cereus (strain G9842).